The chain runs to 379 residues: Putative F-box protein At5g62660 (379 aa).

Residues 35–84 (ALVAPEIPLDLLIEILTKLPAKSLMRFKCVSKLWSSLIRSRFFSNCYLTV) form the F-box domain.

This chain is Putative F-box protein At5g62660, found in Arabidopsis thaliana (Mouse-ear cress).